Reading from the N-terminus, the 172-residue chain is Large ribosomal subunit protein uL10 (172 aa).

It belongs to the universal ribosomal protein uL10 family. Part of the ribosomal stalk of the 50S ribosomal subunit. The N-terminus interacts with L11 and the large rRNA to form the base of the stalk. The C-terminus forms an elongated spine to which L12 dimers bind in a sequential fashion forming a multimeric L10(L12)X complex.

Functionally, forms part of the ribosomal stalk, playing a central role in the interaction of the ribosome with GTP-bound translation factors. The sequence is that of Large ribosomal subunit protein uL10 from Mesorhizobium japonicum (strain LMG 29417 / CECT 9101 / MAFF 303099) (Mesorhizobium loti (strain MAFF 303099)).